The following is a 165-amino-acid chain: Large ribosomal subunit protein uL11A (165 aa).

P2 is modified (n,N-dimethylproline; by NTM1). N6,N6,N6-trimethyllysine; by RKM2 occurs at positions 4 and 11. 2 positions are modified to phosphoserine: S25 and S38. N5-methylarginine; by RMT2 is present on R67. Residues K130 and K146 each participate in a glycyl lysine isopeptide (Lys-Gly) (interchain with G-Cter in ubiquitin) cross-link.

Belongs to the universal ribosomal protein uL11 family. As to quaternary structure, component of the large ribosomal subunit (LSU). Mature yeast ribosomes consist of a small (40S) and a large (60S) subunit. The 40S small subunit contains 1 molecule of ribosomal RNA (18S rRNA) and 33 different proteins (encoded by 57 genes). The large 60S subunit contains 3 rRNA molecules (25S, 5.8S and 5S rRNA) and 46 different proteins (encoded by 81 genes). In terms of processing, it appears that the main modified species for L12 contains 6 methyl groups, 2 on Pro-2, 3 on Lys-4 and 1 on Arg-67. Although not reproduced with a second method, methylation at Lys-11 cannot be ruled out.

The protein localises to the cytoplasm. Functionally, component of the ribosome, a large ribonucleoprotein complex responsible for the synthesis of proteins in the cell. The small ribosomal subunit (SSU) binds messenger RNAs (mRNAs) and translates the encoded message by selecting cognate aminoacyl-transfer RNA (tRNA) molecules. The large subunit (LSU) contains the ribosomal catalytic site termed the peptidyl transferase center (PTC), which catalyzes the formation of peptide bonds, thereby polymerizing the amino acids delivered by tRNAs into a polypeptide chain. The nascent polypeptides leave the ribosome through a tunnel in the LSU and interact with protein factors that function in enzymatic processing, targeting, and the membrane insertion of nascent chains at the exit of the ribosomal tunnel. In Saccharomyces cerevisiae (strain ATCC 204508 / S288c) (Baker's yeast), this protein is Large ribosomal subunit protein uL11A.